The following is a 91-amino-acid chain: MSDYNLVGVIKVMPTDPDVNLDELEEKLKAVIPEKYGLAKVEREPIAFGLVALKFYVLGRDEEGYSFDEVADIFRQVENVESAEVETVSRI.

Belongs to the EF-1-beta/EF-1-delta family.

In terms of biological role, promotes the exchange of GDP for GTP in EF-1-alpha/GDP, thus allowing the regeneration of EF-1-alpha/GTP that could then be used to form the ternary complex EF-1-alpha/GTP/AAtRNA. The chain is Elongation factor 1-beta from Thermococcus kodakarensis (strain ATCC BAA-918 / JCM 12380 / KOD1) (Pyrococcus kodakaraensis (strain KOD1)).